A 137-amino-acid polypeptide reads, in one-letter code: Proofreading thioesterase EntH (137 aa).

Glutamate 63 functions as the Nucleophile or proton acceptor in the catalytic mechanism.

Belongs to the thioesterase PaaI family. As to quaternary structure, homotetramer. Dimer of dimers. Interacts specifically with the aryl carrier protein (ArCP) domain of EntB.

Its subcellular location is the cytoplasm. It participates in siderophore biosynthesis; enterobactin biosynthesis. In terms of biological role, required for optimal enterobactin synthesis. Acts as a proofreading enzyme that prevents EntB misacylation by hydrolyzing the thioester bound existing between EntB and wrongly charged molecules. This Citrobacter koseri (strain ATCC BAA-895 / CDC 4225-83 / SGSC4696) protein is Proofreading thioesterase EntH.